A 493-amino-acid polypeptide reads, in one-letter code: MAPQFKRPELFGFDKSHAQSFVQGKWISSPNNKTFEVDNPATGEIIGKVADVSVEETKKAISAANEAFKTYKNFTHVQRSQLLERWAELIMENKDDLVKMLTLENGKPLSQAEMEVTTCSGYLKWYAAEAVRTFGDVAPSSLQSQNFLISIKQPVGVSALITPWNFPAAMIARKGGAALAAGCTAIFLPAFRTPYVCLGLVRLAQEAGFPDGVLNVITSSDASAHGKELTTNPIVRKVSFTGSTNVGKILMGQSASTIKKVSMELGGNAPFIVFPDFPIDQAVESFCTIKFNSCGQVCVCPNRVYVHKNVYDEFVSKLTEKVKTIKVGDGFDSSSAVGPLISQDGCKKVSKHIEDAVSKGAKITVGGKEISSSKGYFFEPTVLSGVTQDMLVASEETFGPLASVFKFDDTEEVIEWANDSDVGLAGYVFTNNLSTMIHVAKELEVGLVGANIEMVDEPFISFGGIKQSGFGKEAGRLGVQEFMVVKEINLKTL.

Position 242-247 (242-247) interacts with NAD(+); the sequence is GSTNVG. Glutamate 264 is an active-site residue. Cysteine 298 acts as the Nucleophile in catalysis.

This sequence belongs to the aldehyde dehydrogenase family. As to quaternary structure, homotetramer.

Its subcellular location is the cytoplasm. The enzyme catalyses succinate semialdehyde + NAD(+) + H2O = succinate + NADH + 2 H(+). It carries out the reaction succinate semialdehyde + NADP(+) + H2O = succinate + NADPH + 2 H(+). The protein operates within amino-acid degradation; 4-aminobutanoate degradation. Its function is as follows. Catalyzes the oxidation of succinate semialdehyde to succinate. Can utilize both NAD(+) or NADP(+) as a coenzyme. Functions in the GABA shunt, which allows to bypass 2 reactions in the TCA cycle by removing alpha-ketoglutarate from the cycle and feeding succinate and NADH back into the cycle. The polypeptide is Succinate-semialdehyde dehydrogenase [NADP(+)] 2 (ssd2) (Schizosaccharomyces pombe (strain 972 / ATCC 24843) (Fission yeast)).